Here is a 705-residue protein sequence, read N- to C-terminus: Elongation factor G (705 aa).

Residues 8–290 form the tr-type G domain; that stretch reads HRYRNIGIMA…GVIHLLPSPA (283 aa). Residues 17–24, 88–92, and 142–145 each bind GTP; these read AHIDAGKT, DTPGH, and NKMD.

This sequence belongs to the TRAFAC class translation factor GTPase superfamily. Classic translation factor GTPase family. EF-G/EF-2 subfamily.

The protein localises to the cytoplasm. Catalyzes the GTP-dependent ribosomal translocation step during translation elongation. During this step, the ribosome changes from the pre-translocational (PRE) to the post-translocational (POST) state as the newly formed A-site-bound peptidyl-tRNA and P-site-bound deacylated tRNA move to the P and E sites, respectively. Catalyzes the coordinated movement of the two tRNA molecules, the mRNA and conformational changes in the ribosome. The sequence is that of Elongation factor G from Xylella fastidiosa (strain M12).